Here is an 825-residue protein sequence, read N- to C-terminus: Glycerol-3-phosphate acyltransferase (825 aa).

The HXXXXD motif motif lies at C306–M311. Positions S802–G825 are disordered.

This sequence belongs to the GPAT/DAPAT family.

It localises to the cell inner membrane. It carries out the reaction sn-glycerol 3-phosphate + an acyl-CoA = a 1-acyl-sn-glycero-3-phosphate + CoA. It functions in the pathway phospholipid metabolism; CDP-diacylglycerol biosynthesis; CDP-diacylglycerol from sn-glycerol 3-phosphate: step 1/3. The chain is Glycerol-3-phosphate acyltransferase from Pectobacterium atrosepticum (strain SCRI 1043 / ATCC BAA-672) (Erwinia carotovora subsp. atroseptica).